The sequence spans 265 residues: Osteoclast-associated immunoglobulin-like receptor (265 aa).

Residues 1-18 (MVLSLILQLSTLWPACRA) form the signal peptide. Over 19 to 231 (DFTPTAPLAS…LDYTQGNLIR (213 aa)) the chain is Extracellular. Ig-like domains follow at residues 22–115 (PTAP…SQPS) and 125–218 (QLPR…SFEG). N-linked (GlcNAc...) asparagine glycosylation occurs at N47. The cysteines at positions 52 and 99 are disulfide-linked. A glycan (N-linked (GlcNAc...) asparagine) is linked at N144. A helical membrane pass occupies residues 232-248 (LGLAGMVLICLGIIVTC). The Cytoplasmic segment spans residues 249–265 (DWHSRSSAFDGLLPQQN).

The protein belongs to the leukocyte receptor complex/polymeric immunoglobulin receptor (PIR/LRC) family. In terms of tissue distribution, specifically expressed in preosteoclasts or mature osteoclasts.

It localises to the cell membrane. In terms of biological role, regulator of osteoclastogenesis which plays an important bone-specific function in osteoclast differentiation. In Mus musculus (Mouse), this protein is Osteoclast-associated immunoglobulin-like receptor (Oscar).